Here is a 258-residue protein sequence, read N- to C-terminus: Regulatory protein RecX (258 aa).

Belongs to the RecX family.

Its subcellular location is the cytoplasm. Functionally, modulates RecA activity. The sequence is that of Regulatory protein RecX from Streptococcus thermophilus (strain CNRZ 1066).